The primary structure comprises 299 residues: Non-structural protein V (299 aa).

A disordered region spans residues 40–91 (SDNPGQERATYKEEKAGGSGLSKPCLSAIGSTEGGAPRIRGQGSGESDDDTE). The interaction with host STAT1 stretch occupies residues 110-120 (HYVYDHSGEAV). The tract at residues 133–163 (SGLDGDSTLSEGDNESENSDVDIGEPDTEGY) is disordered. The segment covering 144 to 160 (GDNESENSDVDIGEPDT) has biased composition (acidic residues). Zn(2+) is bound by residues His-232, Cys-251, Cys-255, Cys-267, Cys-269, Cys-272, Cys-276, and Cys-279.

Belongs to the paramyxoviruses V protein family. In terms of assembly, interacts with host IFIH1/MDA5 and DHX58/LGP2; these interactions are involved in the inhibition of the host type I interferon signaling pathway. Interacts with host TYK2; this interaction inhibits the type I interferon signaling pathway without affecting the type II pathway. Interacts with host IRF7; this interaction inhibits IRF7 translocation to the nucleus. Interacts with host CHUK. Interacts with host RELA/p65; this interaction inhibits the nuclear translocation of NF-KappaB. Interacts (via N-terminus) with host STAT1 and JAK1; these interactions inhibit STAT1 phosphorylation by Jak1 and thereby the type I interferon signaling pathway. Interacts (via C-terminus) with host STAT2; this interaction is involved in the inhibition of the host type I interferon signaling pathway. Forms a complex with host PPP1CA and PPP1CC; this interaction prevents dephosphorylation of host IFIH1/MDA5 and leads to the inhibition of the host type I interferon signaling pathway. Interacts with host IRF9; this interaction prevents the binding of IRF9 to STAT2 and thereby the type I interferon signaling pathway. Interacts with host RIGI regulatory protein (via CARDs domain) and host TRIM25 (via SPRY domain); these interactions prevent TRIM25-mediated ubiquitination of RIG-I and disrupts downstream RIG-I signaling.

The protein resides in the host cytoplasm. Plays an essential role in the inhibition of host immune response. Prevents the establishment of cellular antiviral state by blocking interferon-alpha/beta (IFN-alpha/beta) production and signaling pathway. Interacts with host IFIH1/MDA5 and DHX58/LGP2 to inhibit the transduction pathway involved in the activation of IFN-beta promoter, thus protecting the virus against cell antiviral state. Blocks the type I interferon signaling pathway by interacting with host TYK2 and thereby inhibiting downstream STAT1 and STAT2 phosphorylation. Blocks the type I interferon signaling pathway by disrupting the RIG-I signaling pathway. Moderately affects the type II interferon signaling. Prevents PP1alpha/gamma-mediated dephosphorylation of host IFIH1/MDA5 and thus blocks its activation. This Homo sapiens (Human) protein is Non-structural protein V (P/V).